Consider the following 436-residue polypeptide: Na(+)/H(+) antiporter NhaA 1 (436 aa).

The next 11 helical transmembrane spans lie at 35 to 55 (FGGG…NSPW), 80 to 100 (LATW…GLEL), 116 to 136 (ALPV…YVGV), 147 to 167 (GWAI…AVIG), 176 to 196 (AFLL…IAIF), 201 to 221 (FKLT…LLVQ), 226 to 246 (WWWA…ESGV), 283 to 303 (VSAG…SLRG), 313 to 333 (PIVV…IFGS), 354 to 374 (LLGV…IGEL), and 385 to 405 (VKAA…IVLI).

Belongs to the NhaA Na(+)/H(+) (TC 2.A.33) antiporter family.

The protein resides in the cell membrane. The catalysed reaction is Na(+)(in) + 2 H(+)(out) = Na(+)(out) + 2 H(+)(in). Na(+)/H(+) antiporter that extrudes sodium in exchange for external protons. This is Na(+)/H(+) antiporter NhaA 1 from Salinispora tropica (strain ATCC BAA-916 / DSM 44818 / JCM 13857 / NBRC 105044 / CNB-440).